The following is a 192-amino-acid chain: MRRFVLDTSVFTNPHCAVQFGEDPLAGVQTFLHLARRCPAEFYMPLSVYDEFRRMRDLAEMAADFETDVWVRSPRRFSMTIPAEILYEFIHELRGRIDRGLRIAEEHTRQAGAATDMRPELIASLRERYREAMRKGLVDSREDVDAVLLAMELDAELVSADEGMRKLGNRMGVKLLTADYLRQVMENLGAGH.

This sequence belongs to the HARP family.

The catalysed reaction is Endonucleolytic cleavage of RNA, removing 5'-extranucleotides from tRNA precursor.. Functionally, RNA-free RNase P that catalyzes the removal of the 5'-leader sequence from pre-tRNA to produce the mature 5'-terminus. The chain is RNA-free ribonuclease P from Alkalilimnicola ehrlichii (strain ATCC BAA-1101 / DSM 17681 / MLHE-1).